Consider the following 873-residue polypeptide: DNA mismatch repair protein MutS (873 aa).

ATP is bound at residue 628–635 (GPNMAGKS).

The protein belongs to the DNA mismatch repair MutS family.

In terms of biological role, this protein is involved in the repair of mismatches in DNA. It is possible that it carries out the mismatch recognition step. This protein has a weak ATPase activity. This is DNA mismatch repair protein MutS from Chlorobium chlorochromatii (strain CaD3).